We begin with the raw amino-acid sequence, 344 residues long: AP2/ERF and B3 domain-containing transcription factor RAV1 (344 aa).

Low complexity predominate over residues 1-15 (MESSSVDESTTSTGS). Positions 1 to 22 (MESSSVDESTTSTGSICETPAI) are disordered. A DNA-binding region (AP2/ERF) is located at residues 61 to 116 (KYKGVVPQPNGRWGAQIYEKHQRVWLGTFNEEDEAARAYDVAVHRFRRRDAVTNFK). The tract at residues 148–169 (ELEQSKRRRNGNGNMTRTLLTS) is disordered. A DNA-binding region (TF-B3) is located at residues 188–292 (FEKAVTPSDV…QLYIGWKSRS (105 aa)).

This sequence belongs to the AP2/ERF transcription factor family. RAV subfamily. Monomer. Expressed in all tissues examined: Roots, rosette leaves, cauline leaves, inflorescence stems, flowers and siliques. Highest expression in roots and rosette leaves. Very low expression in flowers.

It localises to the nucleus. Its function is as follows. Binds specifically to bipartite recognition sequences composed of two unrelated motifs, 5'-CAACA-3' and 5'-CACCTG-3'. May function as negative regulator of plant growth and development. The polypeptide is AP2/ERF and B3 domain-containing transcription factor RAV1 (RAV1) (Arabidopsis thaliana (Mouse-ear cress)).